The following is a 161-amino-acid chain: UPF0225 protein NTHI0386 (161 aa).

Belongs to the UPF0225 family.

The sequence is that of UPF0225 protein NTHI0386 from Haemophilus influenzae (strain 86-028NP).